Here is a 96-residue protein sequence, read N- to C-terminus: MSAVSREGDDWILRLYIQPKASRDLIIGLHGDELKVAITAPPVDGQANAHLLKFIAKQFRVAKSRITLEKGELGRHKQLRISQPQQIPDAVAAALG.

Belongs to the UPF0235 family.

The polypeptide is UPF0235 protein NT01EI_0281 (Edwardsiella ictaluri (strain 93-146)).